A 344-amino-acid polypeptide reads, in one-letter code: GTPase Obg (344 aa).

Residues 1–159 (MKFLDEAKVY…MWLILRLKLI (159 aa)) enclose the Obg domain. The OBG-type G domain maps to 160–327 (ADAGLVGLPN…ALRAIQAQLD (168 aa)). Residues 166 to 173 (GLPNAGKS), 191 to 195 (FTTLH), 212 to 215 (DIPG), 279 to 282 (SKAD), and 308 to 310 (SAA) contribute to the GTP site. Mg(2+)-binding residues include S173 and T193.

This sequence belongs to the TRAFAC class OBG-HflX-like GTPase superfamily. OBG GTPase family. Monomer. Mg(2+) serves as cofactor.

The protein resides in the cytoplasm. In terms of biological role, an essential GTPase which binds GTP, GDP and possibly (p)ppGpp with moderate affinity, with high nucleotide exchange rates and a fairly low GTP hydrolysis rate. Plays a role in control of the cell cycle, stress response, ribosome biogenesis and in those bacteria that undergo differentiation, in morphogenesis control. This is GTPase Obg from Methylorubrum populi (strain ATCC BAA-705 / NCIMB 13946 / BJ001) (Methylobacterium populi).